Consider the following 369-residue polypeptide: 1-aminocyclopropane-1-carboxylate oxidase homolog 3 (369 aa).

Residues K217–G318 enclose the Fe2OG dioxygenase domain. The Fe cation site is built by H241, D243, and H297.

The protein belongs to the iron/ascorbate-dependent oxidoreductase family. Fe cation serves as cofactor.

This Arabidopsis thaliana (Mouse-ear cress) protein is 1-aminocyclopropane-1-carboxylate oxidase homolog 3.